The following is a 257-amino-acid chain: UPF0246 protein Sbal223_3241 (257 aa).

The protein belongs to the UPF0246 family.

This is UPF0246 protein Sbal223_3241 from Shewanella baltica (strain OS223).